Consider the following 346-residue polypeptide: MFATPLRQPTNASGARPAVSMDGQETPFQYEITDHGYGKDAVKVLHVSRKGPVHTIQEFEVGTHLKLYSKKDYYQGNNSDIVATDSQKNTVYLLAKKYGIESPEKFALMLGQHFLNKYSHVEEAHVHVETYPWQRVCQEETKSVNNQGQGSCNNFTSIDNRSLHNHAFIFTPTALHYCDVVIRRTDPKQTVITGIKGLRVLKTTQSSFVNFVNDEFRSLPDQYDRIFSTVVDCSWEYSDTETVNFSRAWQTVKNIILRNFAGDPQVGVSSPSVQHTLYLSEKQVLDVIPQVSVISMTMPNKHYFNFDTKPFQKIVPGDNNEVFIPVDKPHGTIYAQLARKNISSHL.

Positions 1–23 (MFATPLRQPTNASGARPAVSMDG) are disordered. Catalysis depends on charge relay system residues Lys-39 and Thr-84. Urate is bound by residues Thr-84, Asp-85, Phe-208, Arg-225, Val-273, Gln-274, and Asn-300. The Charge relay system role is filled by His-302. Residues 344 to 346 (SHL) carry the Microbody targeting signal motif.

This sequence belongs to the uricase family. In terms of tissue distribution, malpighian tubules.

It is found in the peroxisome. It carries out the reaction urate + O2 + H2O = 5-hydroxyisourate + H2O2. It functions in the pathway purine metabolism; urate degradation; (S)-allantoin from urate: step 1/3. With respect to regulation, repressed by 20-hydroxyecdysone. Functionally, catalyzes the oxidation of uric acid to 5-hydroxyisourate, which is further processed to form (S)-allantoin. The protein is Uricase (Uro) of Drosophila pseudoobscura pseudoobscura (Fruit fly).